The primary structure comprises 115 residues: MRVKTGPTTRRRRKSWLKKAEGAWGINSTSYRNAKQTVMQASKYAYRDRKNKKRDFRKLWIARINAAIRKENYTYSAFMHKLKQKEIAINRKMLSELAIQNPEEFKKFVHSVMLK.

This sequence belongs to the bacterial ribosomal protein bL20 family.

Functionally, binds directly to 23S ribosomal RNA and is necessary for the in vitro assembly process of the 50S ribosomal subunit. It is not involved in the protein synthesizing functions of that subunit. The chain is Large ribosomal subunit protein bL20 from Malacoplasma penetrans (strain HF-2) (Mycoplasma penetrans).